We begin with the raw amino-acid sequence, 211 residues long: Large ribosomal subunit protein bL25 (211 aa).

The interval 175–211 (VSEPVEQDLGEESETEEEGAEGEKPAESTGEEPGDDE) is disordered. Residues 179–194 (VEQDLGEESETEEEGA) show a composition bias toward acidic residues.

The protein belongs to the bacterial ribosomal protein bL25 family. CTC subfamily. As to quaternary structure, part of the 50S ribosomal subunit; part of the 5S rRNA/L5/L18/L25 subcomplex. Contacts the 5S rRNA. Binds to the 5S rRNA independently of L5 and L18.

In terms of biological role, this is one of the proteins that binds to the 5S RNA in the ribosome where it forms part of the central protuberance. The chain is Large ribosomal subunit protein bL25 from Kocuria rhizophila (strain ATCC 9341 / DSM 348 / NBRC 103217 / DC2201).